A 260-amino-acid polypeptide reads, in one-letter code: 3'-5' ssDNA/RNA exonuclease TatD (260 aa).

3 residues coordinate a divalent metal cation: Glu-91, His-127, and His-152.

Belongs to the metallo-dependent hydrolases superfamily. TatD-type hydrolase family. TatD subfamily. In terms of assembly, monomer. Mg(2+) is required as a cofactor.

The protein resides in the cytoplasm. In terms of biological role, 3'-5' exonuclease that prefers single-stranded DNA and RNA. May play a role in the H(2)O(2)-induced DNA damage repair. This is 3'-5' ssDNA/RNA exonuclease TatD from Salmonella typhimurium (strain LT2 / SGSC1412 / ATCC 700720).